A 179-amino-acid polypeptide reads, in one-letter code: Ribosome maturation factor RimM (179 aa).

Residues 96 to 179 form the PRC barrel domain; it reads DNEFYWVDLI…KITVDWGLDY (84 aa).

The protein belongs to the RimM family. Binds ribosomal protein uS19.

It is found in the cytoplasm. In terms of biological role, an accessory protein needed during the final step in the assembly of 30S ribosomal subunit, possibly for assembly of the head region. Essential for efficient processing of 16S rRNA. May be needed both before and after RbfA during the maturation of 16S rRNA. It has affinity for free ribosomal 30S subunits but not for 70S ribosomes. This Janthinobacterium sp. (strain Marseille) (Minibacterium massiliensis) protein is Ribosome maturation factor RimM.